We begin with the raw amino-acid sequence, 555 residues long: MTHLSDLDIANQSTLQPIKDIAASVGISEDALEPYGHYKAKIDINKITPRENKGKVVLVTAMSPTPAGEGKSTVTVGLADAFHELNKNVMVALREPALGPTFGIKGGATGGGYAQVLPMEDINLHFNGDFHAITTANNALSAFIDNHIHQGNELGIDQRRIEWKRVLDMNDRALRHVNVGLGGPTNGVPREDGFNITVASEIMAILCLSRSIKDLKDKISRITIGYTRDRKPVTVADLKVQGALAMILKDAIKPNLVQSIEGTPALVHGGPFANIAHGCNSILATETARDLADIVVTEAGFGSDLGAEKFMDIKAREAGFDLAAVVVVATIRALKMHGGVAKDNLKEENVEAVKAGIVNLERHVNNIKKFGVEPVVAINAFIHDTDAEVEYVKSWAKENNVRIALTEVWEKGGKGGVDLANEVLEVIDQPNSFKPLYELELPLEQKIEKIVTEIYGGSKVTFSSKAQKQLKQFKENGWDNYPVCMAKTQYSFSDDQTLLGAPSGFEITIRELEAKTGAGFIVALTGAIMTMPGLPKKPAALNMDVTDDGHAIGLF.

65 to 72 (TPAGEGKS) serves as a coordination point for ATP.

Belongs to the formate--tetrahydrofolate ligase family.

It catalyses the reaction (6S)-5,6,7,8-tetrahydrofolate + formate + ATP = (6R)-10-formyltetrahydrofolate + ADP + phosphate. It participates in one-carbon metabolism; tetrahydrofolate interconversion. The chain is Formate--tetrahydrofolate ligase from Staphylococcus aureus (strain Mu3 / ATCC 700698).